The primary structure comprises 807 residues: Shutoff protein (807 aa).

Positions Met1–Gly88 are disordered. Over residues Phe16–Thr29 the composition is skewed to polar residues. Basic and acidic residues-rich tracts occupy residues Arg59–Gln70 and Gln79–Gly88. Residues Val280–Cys345 are binding to host EIF4G. Positions Arg348–Ser466 constitute an RRM domain. Phosphotyrosine; by host is present on residues Tyr365 and Tyr682. Positions Asp684–Pro807 are disordered. The span at Gly726–Gly743 shows a compositional bias: gly residues. Residues Gly744 to Arg755 are compositionally biased toward basic and acidic residues. A compositionally biased stretch (basic residues) spans Gly756–Arg765.

Belongs to the adenoviridae shutoff protein family. As to quaternary structure, monomer. Interacts with hexon protein; this interaction allows chaperoning and trimerization of hexon proteins. Interacts (via N-terminus) with host initiation factor EIF4G (via C-terminus). Interacts (via RRM domain) with viral mRNAs that contain the tripartite leader; this interaction allows ribosome shunting and expression of viral late mRNAs. In terms of processing, might be cleaved by the viral protease. Phosphorylated. Tyrosine phosphorylation enhances preferential binding to tripartite leader mRNAs and allows ribosome shunting. Post-translationally, methylated. Asymmetric dimethylation by host PRMT1 of the Arg/Gly-rich region may regulate shutoff protein binding to hexon and promote the capsid assembly in the nucleus.

The protein resides in the host cytoplasm. Functionally, protein that inhibits host translation while promoting late viral translation by ribosome shunting. Blocks host cap-dependent translation by binding to eIF4G, displacing MKNK1 from cap initiation complexes and preventing EIF4E phosphorylation. Binds to the tripartite leader sequence of viral late mRNAs and recruits host eIF4G, PABPC1/poly-A binding protein and 40S ribosomes subunits on viral mRNAs, allowing ribosome shunting and efficient translation of late viral mRNAs even though conventional translation via ribosome scanning from the cap has been shut off in the host cell. During assembly, acts as a chaperone protein that helps hexon proteins assembly into trimers. The protein is Shutoff protein of Homo sapiens (Human).